We begin with the raw amino-acid sequence, 205 residues long: Thiamine-phosphate synthase (205 aa).

Residues 35 to 39 (QYRDK) and Asn67 each bind 4-amino-2-methyl-5-(diphosphooxymethyl)pyrimidine. Asp68 and Asp86 together coordinate Mg(2+). Thr105 lines the 4-amino-2-methyl-5-(diphosphooxymethyl)pyrimidine pocket. 132–134 (SQT) serves as a coordination point for 2-[(2R,5Z)-2-carboxy-4-methylthiazol-5(2H)-ylidene]ethyl phosphate. Lys135 contributes to the 4-amino-2-methyl-5-(diphosphooxymethyl)pyrimidine binding site. 2-[(2R,5Z)-2-carboxy-4-methylthiazol-5(2H)-ylidene]ethyl phosphate is bound at residue Gly162.

It belongs to the thiamine-phosphate synthase family. Mg(2+) is required as a cofactor.

It carries out the reaction 2-[(2R,5Z)-2-carboxy-4-methylthiazol-5(2H)-ylidene]ethyl phosphate + 4-amino-2-methyl-5-(diphosphooxymethyl)pyrimidine + 2 H(+) = thiamine phosphate + CO2 + diphosphate. It catalyses the reaction 2-(2-carboxy-4-methylthiazol-5-yl)ethyl phosphate + 4-amino-2-methyl-5-(diphosphooxymethyl)pyrimidine + 2 H(+) = thiamine phosphate + CO2 + diphosphate. The enzyme catalyses 4-methyl-5-(2-phosphooxyethyl)-thiazole + 4-amino-2-methyl-5-(diphosphooxymethyl)pyrimidine + H(+) = thiamine phosphate + diphosphate. The protein operates within cofactor biosynthesis; thiamine diphosphate biosynthesis; thiamine phosphate from 4-amino-2-methyl-5-diphosphomethylpyrimidine and 4-methyl-5-(2-phosphoethyl)-thiazole: step 1/1. Condenses 4-methyl-5-(beta-hydroxyethyl)thiazole monophosphate (THZ-P) and 2-methyl-4-amino-5-hydroxymethyl pyrimidine pyrophosphate (HMP-PP) to form thiamine monophosphate (TMP). This chain is Thiamine-phosphate synthase, found in Pseudomonas syringae pv. tomato (strain ATCC BAA-871 / DC3000).